A 396-amino-acid polypeptide reads, in one-letter code: Arginine biosynthesis bifunctional protein ArgJ (396 aa).

6 residues coordinate substrate: Thr150, Lys177, Thr188, Glu267, Asn391, and Thr396. The active-site Nucleophile is Thr188.

The protein belongs to the ArgJ family. Heterotetramer of two alpha and two beta chains.

Its subcellular location is the cytoplasm. The catalysed reaction is N(2)-acetyl-L-ornithine + L-glutamate = N-acetyl-L-glutamate + L-ornithine. It catalyses the reaction L-glutamate + acetyl-CoA = N-acetyl-L-glutamate + CoA + H(+). It functions in the pathway amino-acid biosynthesis; L-arginine biosynthesis; L-ornithine and N-acetyl-L-glutamate from L-glutamate and N(2)-acetyl-L-ornithine (cyclic): step 1/1. Its pathway is amino-acid biosynthesis; L-arginine biosynthesis; N(2)-acetyl-L-ornithine from L-glutamate: step 1/4. In terms of biological role, catalyzes two activities which are involved in the cyclic version of arginine biosynthesis: the synthesis of N-acetylglutamate from glutamate and acetyl-CoA as the acetyl donor, and of ornithine by transacetylation between N(2)-acetylornithine and glutamate. The polypeptide is Arginine biosynthesis bifunctional protein ArgJ (Wolinella succinogenes (strain ATCC 29543 / DSM 1740 / CCUG 13145 / JCM 31913 / LMG 7466 / NCTC 11488 / FDC 602W) (Vibrio succinogenes)).